Reading from the N-terminus, the 1038-residue chain is Protein argonaute 1D (1038 aa).

2 disordered regions span residues 1–58 (MGSR…GAAP) and 110–134 (APHEPPANVSSPEAASPEASSPRSL). Composition is skewed to gly residues over residues 18-29 (RGGGRGGGGRGR) and 43-52 (GHGGRGGAGY). The segment covering 115–134 (PANVSSPEAASPEASSPRSL) has biased composition (low complexity). In terms of domain architecture, PAZ spans 380 to 493 (PVIDFVIQLL…LPMEVCKIVE (114 aa)). Residues 669 to 990 (LLIGLLPDNN…AAFRARFYME (322 aa)) enclose the Piwi domain. The interval 992 to 1021 (DSSDSGSMASGRGGGSSTSRSTRAAGGGAV) is disordered.

The protein belongs to the argonaute family. Ago subfamily.

Its function is as follows. Probably involved in the RNA silencing pathway. May bind to short RNAs such as microRNAs (miRNAs) or short interfering RNAs (siRNAs), and represses the translation of mRNAs which are complementary to them. The protein is Protein argonaute 1D (AGO1D) of Oryza sativa subsp. japonica (Rice).